We begin with the raw amino-acid sequence, 491 residues long: Keratin, type II microfibrillar, component 7C (491 aa).

Position 1 is a blocked amino end (Cys) (Cys1). A head region spans residues 1 to 109 (CGFSTVGSGF…PNAQCVKQEE (109 aa)). The IF rod domain occupies 109-420 (EKEQIKCLNN…RLLEGEEQRL (312 aa)). The tract at residues 110–144 (KEQIKCLNNRFAAFIDKVRFLEQQNKLLETKLQFF) is coil 1A. The interval 145 to 154 (QNRQCCESNL) is linker 1. Positions 155 to 255 (EPLFEGYIET…YQEEIRVLQA (101 aa)) are coil 1B. The linker 12 stretch occupies residues 256-272 (NISDTSVIVKMDNSRDL). A coil 2 region spans residues 273–416 (NMDCIVAEIK…ATYRRLLEGE (144 aa)). Residues 417-491 (EQRLCEGVGA…GGGSCSLGRC (75 aa)) are tail.

The protein belongs to the intermediate filament family.

Functionally, wool microfibrillar keratin. The sequence is that of Keratin, type II microfibrillar, component 7C from Ovis aries (Sheep).